Reading from the N-terminus, the 374-residue chain is Resuscitation-promoting factor Rpf2 (374 aa).

Residues 1 to 40 (MAPHQKSRINRINSTRSVPLRLATGGVLATLLIGGVTAAA) form the signal peptide. The G5 domain maps to 210-290 (IDRVDNTEIT…PATISRGTKT (81 aa)). Residues 228-252 (PTYVDDPEAPAGDETVVEEGAPGTK) form a disordered region.

Belongs to the transglycosylase family. Rpf subfamily. Glycosylated; by Pmt, by at least mannose and galactose. Other unidentified sugars may also be present. In terms of processing, may be subject to proteolytic cleavage as multiple shorter forms are detected in gels. Post-translationally, at least 3 non-glycosylated protein isoforms of 35, 40 and 42 kDa are seen in gels.

Its subcellular location is the secreted. The protein resides in the cell surface. Factor that stimulates resuscitation of dormant cells. Has peptidoglycan (PG) hydrolytic activity. Active in the pM concentration range. Has little to no effect on actively-growing cells. PG fragments could either directly activate the resuscitation pathway of dormant bacteria or serve as a substrate for endogenous Rpf, resulting in low molecular weight products with resuscitation activity. This is Resuscitation-promoting factor Rpf2 (rpf2) from Corynebacterium glutamicum (strain ATCC 13032 / DSM 20300 / JCM 1318 / BCRC 11384 / CCUG 27702 / LMG 3730 / NBRC 12168 / NCIMB 10025 / NRRL B-2784 / 534).